The primary structure comprises 246 residues: Nuclear transcription factor Y subunit C-2 (246 aa).

Disordered stretches follow at residues 1 to 35 (MDNQ…AVPH) and 205 to 246 (QQGA…PSSE). Residues 9–21 (AGQPAAAGAGAPV) are compositionally biased toward low complexity.

It belongs to the NFYC/HAP5 subunit family. Heterotrimeric transcription factor composed of three components, NF-YA, NF-YB and NF-YC. NF-YB and NF-YC must interact and dimerize for NF-YA association and DNA binding. Interacts with NFYB8, NFYB10 and HD5/NFYB11.

It localises to the nucleus. It is found in the cytoplasm. Functionally, probable transcription factor involved in the regulation of flowering time under long day (LD) conditions. Functions as a repressor of flowering, independently of HD1 and GHD7. Controls flowering time by negatively regulating the expression of EHD1 and HD3A. Component of the NF-Y/HAP transcription factor complex. The chain is Nuclear transcription factor Y subunit C-2 from Oryza sativa subsp. japonica (Rice).